Reading from the N-terminus, the 441-residue chain is Lysine histidine transporter-like 2 (441 aa).

Topologically, residues 1–32 (MEKSQSSPTKDASTKQKNVDDWLPITSSRNAK) are cytoplasmic. A helical transmembrane segment spans residues 33–53 (WWYSAFHNVTAMVGAGVLSLP). At 54 to 58 (YAMSN) the chain is on the extracellular side. Residues 59–79 (LGWGPGVTIMIMSWLITFYTL) traverse the membrane as a helical segment. Over 80 to 110 (WQMVQMHEMVPGKRFDRYHELGQHAFGEKLG) the chain is Cytoplasmic. The helical transmembrane segment at 111-131 (LWIVVPQQLIVEVGVDIVYMV) threads the bilayer. At 132–155 (TGGKSLKKIHDLLCTDCKNIRTTY) the chain is on the extracellular side. 2 helical membrane passes run 156–176 (WIMI…FNSI) and 177–197 (SIVS…AWAT). Residues 198-222 (SVKKGVHPNVDYSSRASTTSGNVFN) lie on the Extracellular side of the membrane. Residues 223–243 (FLNALGDVAFAYAGHNVVLEI) form a helical membrane-spanning segment. Residues 244 to 264 (QATIPSTPEKPSKIAMWKGVV) lie on the Cytoplasmic side of the membrane. A helical membrane pass occupies residues 265-285 (VAYIVVAICYFPVAFVCYYIF). Topologically, residues 286–300 (GNSVDDNILMTLEKP) are extracellular. Residues 301 to 321 (IWLIAIANAFVVVHVIGSYQI) traverse the membrane as a helical segment. Topologically, residues 322-347 (YAMPVFDMLETFLVKKMMFAPSFKLR) are cytoplasmic. The chain crosses the membrane as a helical span at residues 348 to 370 (FITRTLYVAFTMFVAICIPFFGG). Residues 371-373 (LLG) lie on the Extracellular side of the membrane. The chain crosses the membrane as a helical span at residues 374-396 (FFGGFAFAPTTYYLPCIMWLCIK). Topologically, residues 397 to 406 (KPKKYGLSWC) are cytoplasmic. Residues 407–427 (INWFCIVVGVILTILAPIGGL) form a helical membrane-spanning segment. Residues 428-441 (RTIIISAKNYEFFS) are Extracellular-facing.

This sequence belongs to the amino acid/polyamine transporter 2 family. Amino acid/auxin permease (AAAP) (TC 2.A.18.2) subfamily.

It localises to the cell membrane. Amino acid transporter. The polypeptide is Lysine histidine transporter-like 2 (Arabidopsis thaliana (Mouse-ear cress)).